The primary structure comprises 344 residues: F-box protein HRT3 (344 aa).

The stretch at 14–47 is one TPR repeat; that stretch reads AIAIWEKGVLKEKDGSMSDAINFYRSALKIHDNV. The 51-residue stretch at 98–148 folds into the F-box domain; it reads WILEILPDDILLRIIKKVILMSGESWVNLSMTCSTFSKLCFHDSVPFKTFA.

In terms of assembly, interacts with SKP1. Component of the probable SCF(HRT3) complex containing CDC53, SKP1, RBX1 and HRT3.

It functions in the pathway protein modification; protein ubiquitination. Functionally, substrate recognition component of a SCF (SKP1-CUL1-F-box protein) E3 ubiquitin-protein ligase complex which mediates the ubiquitination and subsequent proteasomal degradation of target proteins. Probably recognizes and binds to phosphorylated target proteins. In Saccharomyces cerevisiae (strain ATCC 204508 / S288c) (Baker's yeast), this protein is F-box protein HRT3 (HRT3).